We begin with the raw amino-acid sequence, 940 residues long: Isoleucine--tRNA ligase (940 aa).

The short motif at 58 to 68 (PYANGSIHIGH) is the 'HIGH' region element. Position 564 (Glu564) interacts with L-isoleucyl-5'-AMP. Positions 605–609 (KMSKS) match the 'KMSKS' region motif. Lys608 provides a ligand contact to ATP. Zn(2+)-binding residues include Cys903, Cys906, Cys923, and Cys926.

Belongs to the class-I aminoacyl-tRNA synthetase family. IleS type 1 subfamily. As to quaternary structure, monomer. Requires Zn(2+) as cofactor.

The protein resides in the cytoplasm. The enzyme catalyses tRNA(Ile) + L-isoleucine + ATP = L-isoleucyl-tRNA(Ile) + AMP + diphosphate. In terms of biological role, catalyzes the attachment of isoleucine to tRNA(Ile). As IleRS can inadvertently accommodate and process structurally similar amino acids such as valine, to avoid such errors it has two additional distinct tRNA(Ile)-dependent editing activities. One activity is designated as 'pretransfer' editing and involves the hydrolysis of activated Val-AMP. The other activity is designated 'posttransfer' editing and involves deacylation of mischarged Val-tRNA(Ile). This chain is Isoleucine--tRNA ligase, found in Shewanella oneidensis (strain ATCC 700550 / JCM 31522 / CIP 106686 / LMG 19005 / NCIMB 14063 / MR-1).